The primary structure comprises 285 residues: MRTSNHLIGLVNFLTFLLSIPILGGGIWLSSRANSTDCLRFLQWPLIVIGISIMVVSLAGFAGACYRNKFLMWLYLVVMLLIIAALIGFIIFAYAVTDKGSGRTVLNRGYLDYYLEDYSGWLKDRVSDDSYWGKISSCLRDSGACRKIGRNFNGVPETADMFFLRRLSPVESGCCKPPTDCGFSYVNETGWDTRGGMIGPNQDCMVWSNDQSMLCYQCSSCKAGVLGSLKKSWRKVSVINIVVLIILVIFYVIAYAAYRNVKRIDNDEPAGEARMTKSHPSHFHL.

Residues 1 to 6 (MRTSNH) are Cytoplasmic-facing. Residues 7 to 27 (LIGLVNFLTFLLSIPILGGGI) form a helical membrane-spanning segment. Topologically, residues 28–43 (WLSSRANSTDCLRFLQ) are extracellular. Residue asparagine 34 is glycosylated (N-linked (GlcNAc...) asparagine). A helical transmembrane segment spans residues 44–64 (WPLIVIGISIMVVSLAGFAGA). At 65–71 (CYRNKFL) the chain is on the cytoplasmic side. Residues 72 to 92 (MWLYLVVMLLIIAALIGFIIF) form a helical membrane-spanning segment. The Extracellular segment spans residues 93 to 235 (AYAVTDKGSG…LGSLKKSWRK (143 aa)). An N-linked (GlcNAc...) asparagine glycan is attached at asparagine 187. A helical transmembrane segment spans residues 236–256 (VSVINIVVLIILVIFYVIAYA). Over 257–285 (AYRNVKRIDNDEPAGEARMTKSHPSHFHL) the chain is Cytoplasmic.

The protein belongs to the tetraspanin (TM4SF) family.

The protein resides in the cell membrane. Its function is as follows. May be involved in the regulation of cell differentiation. The polypeptide is Tetraspanin-3 (TET3) (Arabidopsis thaliana (Mouse-ear cress)).